We begin with the raw amino-acid sequence, 359 residues long: Glycerol-3-phosphate dehydrogenase [NAD(P)+] (359 aa).

Residues Thr-11, Trp-12, Arg-32, and Lys-107 each contribute to the NADPH site. The sn-glycerol 3-phosphate site is built by Lys-107 and Gly-138. Residue Ala-142 coordinates NADPH. Sn-glycerol 3-phosphate is bound by residues Lys-193, Asp-246, Ser-256, Arg-257, and Asn-258. The active-site Proton acceptor is Lys-193. Arg-257 provides a ligand contact to NADPH. Val-281 and Glu-283 together coordinate NADPH.

The protein belongs to the NAD-dependent glycerol-3-phosphate dehydrogenase family.

Its subcellular location is the cytoplasm. It carries out the reaction sn-glycerol 3-phosphate + NAD(+) = dihydroxyacetone phosphate + NADH + H(+). The enzyme catalyses sn-glycerol 3-phosphate + NADP(+) = dihydroxyacetone phosphate + NADPH + H(+). It participates in membrane lipid metabolism; glycerophospholipid metabolism. Functionally, catalyzes the reduction of the glycolytic intermediate dihydroxyacetone phosphate (DHAP) to sn-glycerol 3-phosphate (G3P), the key precursor for phospholipid synthesis. This is Glycerol-3-phosphate dehydrogenase [NAD(P)+] from Dehalococcoides mccartyi (strain ATCC BAA-2100 / JCM 16839 / KCTC 5957 / BAV1).